The following is a 252-amino-acid chain: Ribosomal RNA small subunit methyltransferase NEP1 (252 aa).

S-adenosyl-L-methionine-binding positions include Met176, Gly209, Gly214, and 227 to 232 (ISNYPL).

It belongs to the class IV-like SAM-binding methyltransferase superfamily. RNA methyltransferase NEP1 family. As to quaternary structure, homodimer. Part of the small subunit (SSU) processome, composed of more than 70 proteins and the RNA chaperone small nucleolar RNA (snoRNA) U3.

The protein resides in the nucleus. It localises to the nucleolus. It catalyses the reaction a pseudouridine in rRNA + S-adenosyl-L-methionine = an N(1)-methylpseudouridine in rRNA + S-adenosyl-L-homocysteine + H(+). Its function is as follows. S-adenosyl-L-methionine-dependent pseudouridine N(1)-methyltransferase that methylates a pseudouridine in 18S rRNA. Involved the biosynthesis of the hypermodified N1-methyl-N3-(3-amino-3-carboxypropyl) pseudouridine (m1acp3-Psi) conserved in eukaryotic 18S rRNA. Also has an essential role in 40S ribosomal subunit biogenesis independent on its methyltransferase activity, facilitating the incorporation of ribosomal protein S19 during the formation of pre-ribosomes. S-adenosyl-L-methionine-dependent pseudouridine N(1)-methyltransferase that methylates pseudouridine at position in 18S rRNA. Involved the biosynthesis of the hypermodified N1-methyl-N3-(3-amino-3-carboxypropyl) pseudouridine (m1acp3-Psi) conserved in eukaryotic 18S rRNA. Is not able to methylate uridine at this position. Also has an essential role in 40S ribosomal subunit biogenesis independent on its methyltransferase activity, facilitating the incorporation of ribosomal protein S19 during the formation of pre-ribosomes. Part of the small subunit (SSU) processome, first precursor of the small eukaryotic ribosomal subunit. During the assembly of the SSU processome in the nucleolus, many ribosome biogenesis factors, an RNA chaperone and ribosomal proteins associate with the nascent pre-rRNA and work in concert to generate RNA folding, modifications, rearrangements and cleavage as well as targeted degradation of pre-ribosomal RNA by the RNA exosome. In Drosophila melanogaster (Fruit fly), this protein is Ribosomal RNA small subunit methyltransferase NEP1.